Consider the following 314-residue polypeptide: Glycerate dehydrogenase (314 aa).

Residues threonine 74, 157–158, 228–230, and aspartate 254 each bind NAD(+); these read AL and TAR. The active site involves arginine 230. Glutamate 259 is a catalytic residue. Residue histidine 280 is the Proton donor of the active site. Residue 280 to 283 coordinates NAD(+); the sequence is HVAW.

This sequence belongs to the D-isomer specific 2-hydroxyacid dehydrogenase family. As to quaternary structure, homodimer.

It localises to the cytoplasm. It catalyses the reaction (R)-glycerate + NAD(+) = 3-hydroxypyruvate + NADH + H(+). It functions in the pathway one-carbon metabolism; formaldehyde assimilation via serine pathway. Functionally, plays a central role in assimilation of carbon. It converts hydroxypyruvate to glycerate as a key step in the serine cycle, and may also play an important role in C2 reactions, by interconverting glyoxylate and glycolate. The polypeptide is Glycerate dehydrogenase (hprA) (Methylorubrum extorquens (strain ATCC 14718 / DSM 1338 / JCM 2805 / NCIMB 9133 / AM1) (Methylobacterium extorquens)).